We begin with the raw amino-acid sequence, 429 residues long: UDP-N-acetylglucosamine 1-carboxyvinyltransferase (429 aa).

Residue 22–23 (KN) participates in phosphoenolpyruvate binding. Residue Arg-102 participates in UDP-N-acetyl-alpha-D-glucosamine binding. The Proton donor role is filled by Cys-126. A 2-(S-cysteinyl)pyruvic acid O-phosphothioketal modification is found at Cys-126. UDP-N-acetyl-alpha-D-glucosamine is bound by residues 131–135 (RPVDL), Asp-316, and Ile-338.

This sequence belongs to the EPSP synthase family. MurA subfamily.

The protein localises to the cytoplasm. The catalysed reaction is phosphoenolpyruvate + UDP-N-acetyl-alpha-D-glucosamine = UDP-N-acetyl-3-O-(1-carboxyvinyl)-alpha-D-glucosamine + phosphate. The protein operates within cell wall biogenesis; peptidoglycan biosynthesis. Its function is as follows. Cell wall formation. Adds enolpyruvyl to UDP-N-acetylglucosamine. In Rhodopseudomonas palustris (strain HaA2), this protein is UDP-N-acetylglucosamine 1-carboxyvinyltransferase.